A 107-amino-acid chain; its full sequence is U1-lycotoxin-Ls1c (107 aa).

Residues 1-20 form the signal peptide; that stretch reads MMKVLVVVALLVTLISYSSS. The propeptide occupies 21 to 41; sequence EGIDDLEADELLSLMANEQTR. Intrachain disulfides connect C44/C59, C51/C68, C58/C86, and C70/C84.

Belongs to the neurotoxin 19 (CSTX) family. 04 (U1-Lctx) subfamily. In terms of tissue distribution, expressed by the venom gland.

It localises to the secreted. The protein is U1-lycotoxin-Ls1c of Lycosa singoriensis (Wolf spider).